Here is a 224-residue protein sequence, read N- to C-terminus: Ribonuclease HII (224 aa).

In terms of domain architecture, RNase H type-2 spans 17–201; it reads GTVIGVDEAG…VLSNLSVKKV (185 aa). 3 residues coordinate a divalent metal cation: Asp23, Glu24, and Asp111.

Belongs to the RNase HII family. Requires Mn(2+) as cofactor. The cofactor is Mg(2+).

Its subcellular location is the cytoplasm. The enzyme catalyses Endonucleolytic cleavage to 5'-phosphomonoester.. In terms of biological role, endonuclease that specifically degrades the RNA of RNA-DNA hybrids. The protein is Ribonuclease HII of Pseudothermotoga lettingae (strain ATCC BAA-301 / DSM 14385 / NBRC 107922 / TMO) (Thermotoga lettingae).